A 347-amino-acid polypeptide reads, in one-letter code: Ileal sodium/bile acid cotransporter (347 aa).

The Extracellular segment spans residues methionine 1 to alanine 29. N-linked (GlcNAc...) asparagine glycosylation is found at asparagine 3 and asparagine 11. Residues isoleucine 30–methionine 50 form a helical membrane-spanning segment. Over glycine 51–threonine 83 the chain is Cytoplasmic. Residues glycine 84–methionine 104 form a helical membrane-spanning segment. At glycine 105–serine 127 the chain is on the extracellular side. A helical membrane pass occupies residues valine 128–valine 148. At tyrosine 149–threonine 158 the chain is on the cytoplasmic side. The chain crosses the membrane as a helical span at residues isoleucine 159 to isoleucine 179. Topologically, residues glycine 180–lysine 196 are extracellular. A helical transmembrane segment spans residues valine 197–tyrosine 217. Topologically, residues glutamine 218–proline 225 are cytoplasmic. The chain crosses the membrane as a helical span at residues lysine 226–alanine 246. The Extracellular portion of the chain corresponds to arginine 247–threonine 289. Residues phenylalanine 290–valine 310 form a helical membrane-spanning segment. Over alanine 311–glutamate 347 the chain is Cytoplasmic. The span at phenylalanine 323 to serine 335 shows a compositional bias: basic and acidic residues. Residues phenylalanine 323–glutamate 347 are disordered. Serine 336 is modified (phosphoserine).

It belongs to the bile acid:sodium symporter (BASS) (TC 2.A.28) family. In terms of assembly, monomer and homodimer.

It localises to the membrane. The catalysed reaction is taurocholate(out) + 2 Na(+)(out) = taurocholate(in) + 2 Na(+)(in). It catalyses the reaction cholate(out) + 2 Na(+)(out) = cholate(in) + 2 Na(+)(in). It carries out the reaction taurochenodeoxycholate(out) + 2 Na(+)(out) = taurochenodeoxycholate(in) + 2 Na(+)(in). The enzyme catalyses tauroursodeoxycholate(out) + 2 Na(+)(out) = tauroursodeoxycholate(in) + 2 Na(+)(in). The catalysed reaction is glycocholate(out) + 2 Na(+)(out) = glycocholate(in) + 2 Na(+)(in). It catalyses the reaction tauronorcholate(out) + 2 Na(+)(out) = tauronorcholate(in) + 2 Na(+)(in). It carries out the reaction tauroallocholate(out) + 2 Na(+)(out) = tauroallocholate(in) + 2 Na(+)(in). The enzyme catalyses taurodeoxycholate(out) + 2 Na(+)(out) = taurodeoxycholate(in) + 2 Na(+)(in). The catalysed reaction is tauro-beta-muricholate(out) + 2 Na(+)(out) = tauro-beta-muricholate(in) + 2 Na(+)(in). Plays a critical role in the sodium-dependent reabsorption of bile acids from the lumen of the small intestine. Transports various bile acids, unconjugated or conjugated, such as cholate and taurocholate. Also responsible for bile acid transport in the renal proximal tubules, a salvage mechanism that helps conserve bile acids. Works collaboratively with the Na(+)-taurocholate cotransporting polypeptide (NTCP), the organic solute transporter (OST), and the bile salt export pump (BSEP), to ensure efficacious biological recycling of bile acids during enterohepatic circulation. The polypeptide is Ileal sodium/bile acid cotransporter (SLC10A2) (Oryctolagus cuniculus (Rabbit)).